A 372-amino-acid polypeptide reads, in one-letter code: NAD(P)H-quinone oxidoreductase subunit 1 (372 aa).

Helical transmembrane passes span 29-49 (WIPF…LVVV), 97-117 (WLFT…YLIV), 130-150 (VGIF…LMAG), 176-196 (LALS…IDIV), 204-224 (ILGW…IAAL), 254-274 (FALF…VFAI), 308-328 (SLGI…AVLM), and 347-367 (FLLP…LAFP).

The protein belongs to the complex I subunit 1 family. In terms of assembly, NDH-1 is composed of at least 11 different subunits.

It localises to the cellular thylakoid membrane. It carries out the reaction a plastoquinone + NADH + (n+1) H(+)(in) = a plastoquinol + NAD(+) + n H(+)(out). The enzyme catalyses a plastoquinone + NADPH + (n+1) H(+)(in) = a plastoquinol + NADP(+) + n H(+)(out). NDH-1 shuttles electrons from an unknown electron donor, via FMN and iron-sulfur (Fe-S) centers, to quinones in the respiratory and/or the photosynthetic chain. The immediate electron acceptor for the enzyme in this species is believed to be plastoquinone. Couples the redox reaction to proton translocation, and thus conserves the redox energy in a proton gradient. This Crocosphaera subtropica (strain ATCC 51142 / BH68) (Cyanothece sp. (strain ATCC 51142)) protein is NAD(P)H-quinone oxidoreductase subunit 1.